The sequence spans 565 residues: DNA-binding protein scr1 (565 aa).

Positions Met1–Asn19 are enriched in polar residues. The interval Met1–Pro25 is disordered. 2 C2H2-type zinc fingers span residues Tyr26–His48 and His54–His78. Disordered regions lie at residues Thr79–Thr119, Ser261–Ser303, Arg390–Ser434, and Ala466–Pro565. Positions Asn80–Ser102 are enriched in low complexity. Polar residues-rich tracts occupy residues Glu108–Thr119, Leu276–His286, and Gly294–Ser303. Residues Pro391–Pro413 show a composition bias toward low complexity. A compositionally biased stretch (polar residues) spans Ala466–Pro478. Low complexity-rich tracts occupy residues Ser479–Ser492, Phe517–Ser526, and Ser537–Ser555.

The protein belongs to the creA/MIG C2H2-type zinc-finger protein family.

It is found in the nucleus. Functionally, involved in carbon catabolite repression. Represses the transcription of various genes including the inv1 gene. The chain is DNA-binding protein scr1 (scr1) from Schizosaccharomyces pombe (strain 972 / ATCC 24843) (Fission yeast).